The chain runs to 99 residues: A-type ATP synthase subunit F (99 aa).

The protein belongs to the V-ATPase F subunit family. Has multiple subunits with at least A(3), B(3), C, D, E, F, H, I and proteolipid K(x).

The protein resides in the cell membrane. Functionally, component of the A-type ATP synthase that produces ATP from ADP in the presence of a proton gradient across the membrane. The sequence is that of A-type ATP synthase subunit F from Methanococcus aeolicus (strain ATCC BAA-1280 / DSM 17508 / OCM 812 / Nankai-3).